Here is a 369-residue protein sequence, read N- to C-terminus: WAT1-related protein At3g53210 (369 aa).

Helical transmembrane passes span 12–31, 39–59, 72–92, 103–123, 133–153, 182–202, 214–234, 252–272, 278–298, and 303–323; these read IAMV…MRYA, LVFP…SAYF, FLIQ…GFYI, ASAT…LLGI, GIAK…ITLY, WTLG…WIVL, FSFV…ISAY, ALLY…IYVV, LFVS…ATLA, and FYLG…LVVM. EamA domains lie at 24–150 and 194–323; these read NHVI…SLVI and LCWS…LVVM. The disordered stretch occupies residues 348 to 369; the sequence is GDEEDYHNNKPRSPISQPLISS.

The protein belongs to the drug/metabolite transporter (DMT) superfamily. Plant drug/metabolite exporter (P-DME) (TC 2.A.7.4) family.

The protein resides in the membrane. This chain is WAT1-related protein At3g53210, found in Arabidopsis thaliana (Mouse-ear cress).